The sequence spans 72 residues: Translation initiation factor IF-1 (72 aa).

In terms of domain architecture, S1-like spans 1 to 72 (MAKDDVIEID…DKGRITYRYK (72 aa)).

This sequence belongs to the IF-1 family. In terms of assembly, component of the 30S ribosomal translation pre-initiation complex which assembles on the 30S ribosome in the order IF-2 and IF-3, IF-1 and N-formylmethionyl-tRNA(fMet); mRNA recruitment can occur at any time during PIC assembly.

Its subcellular location is the cytoplasm. One of the essential components for the initiation of protein synthesis. Stabilizes the binding of IF-2 and IF-3 on the 30S subunit to which N-formylmethionyl-tRNA(fMet) subsequently binds. Helps modulate mRNA selection, yielding the 30S pre-initiation complex (PIC). Upon addition of the 50S ribosomal subunit IF-1, IF-2 and IF-3 are released leaving the mature 70S translation initiation complex. The sequence is that of Translation initiation factor IF-1 from Campylobacter curvus (strain 525.92).